We begin with the raw amino-acid sequence, 277 residues long: Large ribosomal subunit protein uL2 (277 aa).

The segment at 219–277 (TVRGSVMNPNDHPHGGGEGRSPIGHPSPRTPWGKPALGYKTRKNKKYSDRFIVKRRHDK) is disordered.

Belongs to the universal ribosomal protein uL2 family. In terms of assembly, part of the 50S ribosomal subunit. Forms a bridge to the 30S subunit in the 70S ribosome.

One of the primary rRNA binding proteins. Required for association of the 30S and 50S subunits to form the 70S ribosome, for tRNA binding and peptide bond formation. It has been suggested to have peptidyltransferase activity; this is somewhat controversial. Makes several contacts with the 16S rRNA in the 70S ribosome. The chain is Large ribosomal subunit protein uL2 from Clostridium botulinum (strain Okra / Type B1).